Here is a 260-residue protein sequence, read N- to C-terminus: Small ribosomal subunit protein uS3 (260 aa).

Residues 39–114 enclose the KH type-2 domain; sequence LRQYIEQKLG…QIRINVVEVQ (76 aa). The disordered stretch occupies residues 217–260; it reads GQEPDPLPPASRDRERDPRDRDREPRRRQQQRRRQQFEDRSNEG. Composition is skewed to basic and acidic residues over residues 227-243 and 251-260; these read SRDR…EPRR and QQFEDRSNEG.

Belongs to the universal ribosomal protein uS3 family. Part of the 30S ribosomal subunit. Forms a tight complex with proteins S10 and S14.

Its function is as follows. Binds the lower part of the 30S subunit head. Binds mRNA in the 70S ribosome, positioning it for translation. The protein is Small ribosomal subunit protein uS3 of Nostoc punctiforme (strain ATCC 29133 / PCC 73102).